Consider the following 134-residue polypeptide: Small ribosomal subunit protein uS8 (134 aa).

This sequence belongs to the universal ribosomal protein uS8 family. In terms of assembly, part of the 30S ribosomal subunit. Contacts proteins S5 and S12.

In terms of biological role, one of the primary rRNA binding proteins, it binds directly to 16S rRNA central domain where it helps coordinate assembly of the platform of the 30S subunit. The chain is Small ribosomal subunit protein uS8 from Nitratiruptor sp. (strain SB155-2).